The primary structure comprises 20 residues: Agglutinin beta-4 chain (20 aa).

This sequence belongs to the jacalin lectin family. As to quaternary structure, tetramer of four alpha chains associated with two or four beta chains.

Functionally, D-galactose-specific lectin, binds the T-antigen structure Gal-beta1,3-GalNAc (Thomsen-Friedenreich-antigen-specific lectin). Potent and selective stimulant of distinct T- and B-cell functions. Shows a unique ability to specifically recognize IgA-1 from human serum. The polypeptide is Agglutinin beta-4 chain (Artocarpus integer (Jack fruit)).